Consider the following 310-residue polypeptide: Bacteriochlorophyll synthase 34 kDa chain (310 aa).

Polar residues predominate over residues 1–13 (MSDMSDQTRLSSP). The segment at 1–20 (MSDMSDQTRLSSPPSLPLHK) is disordered. Transmembrane regions (helical) follow at residues 39–59 (VTWFAPTWAFMCGAIASGALG), 67–87 (LLLGMFMAGPILCGLSQVVND), 112–132 (HVYILTAVLTWIGASIALFLG), 134–154 (QVAFFVALGLVFALAYSLRPI), 166–186 (LVAISYEGLAWMAGHAAFAPL), 187–207 (TGESVTIALLYSLGAHGIMTV), 248–268 (VIGLLFHWGHPVAATVVAILL), and 287–307 (VFFNATAIMLYVWGMLAAAIG).

The protein localises to the cell membrane. Its pathway is porphyrin-containing compound metabolism; bacteriochlorophyll biosynthesis (light-independent). Its function is as follows. Catalyzes the esterification of bacteriochlorophyllide a by geranylgeraniol-PPi. The protein is Bacteriochlorophyll synthase 34 kDa chain (bchG) of Chloroflexus aurantiacus (strain ATCC 29366 / DSM 635 / J-10-fl).